An 87-amino-acid chain; its full sequence is UPF0335 protein RL4065 (87 aa).

The protein belongs to the UPF0335 family.

The chain is UPF0335 protein RL4065 from Rhizobium johnstonii (strain DSM 114642 / LMG 32736 / 3841) (Rhizobium leguminosarum bv. viciae).